A 276-amino-acid chain; its full sequence is uncharacterized protein (276 aa).

An AB hydrolase-1 domain is found at 20-137; the sequence is PVLIFIPGAN…PPINTFLPDS (118 aa).

Belongs to the AB hydrolase superfamily.

This is an uncharacterized protein from Staphylococcus aureus (strain MRSA252).